The primary structure comprises 1331 residues: DNA-directed RNA polymerase subunit beta' (1331 aa).

Zn(2+)-binding residues include cysteine 220, cysteine 293, cysteine 300, and cysteine 303. Disordered regions lie at residues 1236 to 1257 and 1294 to 1331; these read DFVDEGTSRSPNGYSNVVTNDN and ISGDELISDDTPIPSDVQGKAPVIDDDAMIDDNWMKDQ. A compositionally biased stretch (polar residues) spans 1243-1257; sequence SRSPNGYSNVVTNDN.

The protein belongs to the RNA polymerase beta' chain family. RpoC2 subfamily. As to quaternary structure, in cyanobacteria the RNAP catalytic core is composed of 2 alpha, 1 beta, 1 beta', 1 gamma and 1 omega subunit. When a sigma factor is associated with the core the holoenzyme is formed, which can initiate transcription. It depends on Zn(2+) as a cofactor.

It carries out the reaction RNA(n) + a ribonucleoside 5'-triphosphate = RNA(n+1) + diphosphate. Its function is as follows. DNA-dependent RNA polymerase catalyzes the transcription of DNA into RNA using the four ribonucleoside triphosphates as substrates. The sequence is that of DNA-directed RNA polymerase subunit beta' from Picosynechococcus sp. (strain ATCC 27264 / PCC 7002 / PR-6) (Agmenellum quadruplicatum).